Reading from the N-terminus, the 306-residue chain is MIFQRTVKEMVKTTGVGLHSGNKVTLIIKPAPVNTGIKLVRTDLSPAVEIPAVADQVRETTMCTALVNDDGVRISTIEHLFAALAGLGIDNAVIEVDAPEIPIMDGSASPFVFLLQSVGIQEQNAAKKYIKITKPIRVEDGDKWAELKPFKGFRVDFAIDFNHPEIARSQQHMVMDFSSSAFIKDISRARTFGFMRDIEYLRANNLALGGSMENAVVLDEYRVLNPDGLRYEDEFVKHKILDAFGDLYVAGHAIVGEFCAYKTGHALNNQLVRAMLAQQDAWEIVSFEKEADAPVSFSVPAGAVFA.

Residues histidine 79, histidine 238, and aspartate 242 each contribute to the Zn(2+) site. The Proton donor role is filled by histidine 265.

Belongs to the LpxC family. It depends on Zn(2+) as a cofactor.

It catalyses the reaction a UDP-3-O-[(3R)-3-hydroxyacyl]-N-acetyl-alpha-D-glucosamine + H2O = a UDP-3-O-[(3R)-3-hydroxyacyl]-alpha-D-glucosamine + acetate. It functions in the pathway glycolipid biosynthesis; lipid IV(A) biosynthesis; lipid IV(A) from (3R)-3-hydroxytetradecanoyl-[acyl-carrier-protein] and UDP-N-acetyl-alpha-D-glucosamine: step 2/6. Functionally, catalyzes the hydrolysis of UDP-3-O-myristoyl-N-acetylglucosamine to form UDP-3-O-myristoylglucosamine and acetate, the committed step in lipid A biosynthesis. This chain is UDP-3-O-acyl-N-acetylglucosamine deacetylase, found in Shewanella pealeana (strain ATCC 700345 / ANG-SQ1).